We begin with the raw amino-acid sequence, 144 residues long: D-aminoacyl-tRNA deacylase (144 aa).

The Gly-cisPro motif, important for rejection of L-amino acids signature appears at 136–137 (GP).

This sequence belongs to the DTD family. Homodimer.

It is found in the cytoplasm. The enzyme catalyses glycyl-tRNA(Ala) + H2O = tRNA(Ala) + glycine + H(+). The catalysed reaction is a D-aminoacyl-tRNA + H2O = a tRNA + a D-alpha-amino acid + H(+). In terms of biological role, an aminoacyl-tRNA editing enzyme that deacylates mischarged D-aminoacyl-tRNAs. Also deacylates mischarged glycyl-tRNA(Ala), protecting cells against glycine mischarging by AlaRS. Acts via tRNA-based rather than protein-based catalysis; rejects L-amino acids rather than detecting D-amino acids in the active site. By recycling D-aminoacyl-tRNA to D-amino acids and free tRNA molecules, this enzyme counteracts the toxicity associated with the formation of D-aminoacyl-tRNA entities in vivo and helps enforce protein L-homochirality. The protein is D-aminoacyl-tRNA deacylase of Actinobacillus succinogenes (strain ATCC 55618 / DSM 22257 / CCUG 43843 / 130Z).